Here is a 425-residue protein sequence, read N- to C-terminus: Type I restriction enzyme MjaVIII specificity subunit (425 aa).

The protein belongs to the type-I restriction system S methylase family. The type I restriction/modification system is composed of three polypeptides R, M and S.

Its function is as follows. The specificity (S) subunit of a type I restriction enzyme; this subunit dictates DNA sequence specificity. The M and S subunits together form a methyltransferase (MTase) that methylates A-2 on the top and A-3 on the bottom strand of the sequence 5'-GAYN(5)GTAA-3'. In the presence of the R subunit the complex can also act as an endonuclease, binding to the same target sequence but cutting the DNA some distance from this site. Whether the DNA is cut or modified depends on the methylation state of the target sequence. When the target site is unmodified, the DNA is cut. When the target site is hemimethylated, the complex acts as a maintenance MTase modifying the DNA so that both strands become methylated. After locating a non-methylated recognition site, the enzyme complex serves as a molecular motor that translocates DNA in an ATP-dependent manner until a collision occurs that triggers cleavage. This is Type I restriction enzyme MjaVIII specificity subunit from Methanocaldococcus jannaschii (strain ATCC 43067 / DSM 2661 / JAL-1 / JCM 10045 / NBRC 100440) (Methanococcus jannaschii).